The primary structure comprises 388 residues: L-lactate dehydrogenase (388 aa).

Residues 1 to 380 form the FMN hydroxy acid dehydrogenase domain; sequence MIISSSSDYR…SRDSLVREIE (380 aa). Y24 contacts substrate. FMN contacts are provided by S106 and Q127. Y129 lines the substrate pocket. T155 is an FMN binding site. R164 serves as a coordination point for substrate. K251 provides a ligand contact to FMN. H275 acts as the Proton acceptor in catalysis. Residue R278 coordinates substrate. 306–330 contacts FMN; the sequence is DSGIRSGLDVVRMLAQGADGVLLGR.

It belongs to the FMN-dependent alpha-hydroxy acid dehydrogenase family. FMN is required as a cofactor.

Its subcellular location is the cell inner membrane. It carries out the reaction (S)-lactate + A = pyruvate + AH2. Its function is as follows. Catalyzes the conversion of L-lactate to pyruvate. Is coupled to the respiratory chain. The polypeptide is L-lactate dehydrogenase (Xanthobacter autotrophicus (strain ATCC BAA-1158 / Py2)).